Here is a 403-residue protein sequence, read N- to C-terminus: Glycerophosphocholine acyltransferase 1 (403 aa).

The Cytoplasmic segment spans residues 1–112; sequence MDHLEFDENT…SGKVVRFRDK (112 aa). A helical transmembrane segment spans residues 113-133; the sequence is LSFALGVSTCILTALLVGMAP. The Lumenal portion of the chain corresponds to 134-137; it reads ESMH. Residues 138 to 155 traverse the membrane as a helical segment; that stretch reads LWYTIQLFVYLPLRYYTY. The Cytoplasmic portion of the chain corresponds to 156-161; that stretch reads QRKGYE. Residues 162–182 traverse the membrane as a helical segment; that stretch reads YFIADFCYWGNILLLVYIWIF. At 183-186 the chain is on the lumenal side; that stretch reads PESR. Residues 187-207 traverse the membrane as a helical segment; sequence RLFILSYSISYGTLAWSVVAW. The Cytoplasmic portion of the chain corresponds to 208–218; that stretch reads RNSLLFHSIDK. The helical transmembrane segment at 219-239 threads the bilayer; the sequence is ITSLFIHFFPPLVLHTIVHLT. N-linked (GlcNAc...) asparagine glycosylation occurs at Asn240. Over 240-262 the chain is Lumenal; the sequence is NKSYLKDRFPAVLKVKKIDLLSS. A helical membrane pass occupies residues 263 to 283; it reads VEIASFFYALWQIWYYFFIQV. The Cytoplasmic portion of the chain corresponds to 284-322; the sequence is GKQKQIQEGRPTSFTWLSKAYSKTKLGRAVAKLPQNLQP. A helical membrane pass occupies residues 323 to 343; sequence FVFMIIQYLYSITTMLPCSLW. Residues 344-352 are Lumenal-facing; sequence YNNKLYSTA. A helical transmembrane segment spans residues 353-373; it reads FLALIFGWSVWNGASYYIDVF. Over 374–403 the chain is Cytoplasmic; that stretch reads GRRFQKELEALRQQLAETPTNSGSSSALSR.

This sequence belongs to the GPC1 family.

It localises to the endoplasmic reticulum membrane. The protein localises to the golgi apparatus membrane. The enzyme catalyses sn-glycerol 3-phosphocholine + an acyl-CoA = a 1-acyl-sn-glycero-3-phosphocholine + CoA. It carries out the reaction sn-glycero-3-phosphoethanolamine + an acyl-CoA = a monoacyl-sn-glycero-3-phosphoethanolamine + CoA. It catalyses the reaction sn-glycero-3-phosphoethanolamine + (9Z)-octadecenoyl-CoA = (9Z-octadecenoyl)-sn-glycero-3-phosphoethanolamine + CoA. Functionally, glycerophosphocholine acyltransferase (GPCAT) that utilizes acyl-CoA to acylate glycero-3-phosphocholine (GPC), forming lysophosphatidylcholine (LPC). Shows broad acyl specificities with a preference for 16:0-CoA, polyunsaturated acyl-CoA, and the hydroxylated ricinoleoyl-CoA. Also catalyzes the acylation of glycero-3-phosphoethanolamine (GPE) with acyl-CoA. In addition to acyl-CoA, GPCAT efficiently utilizes LPC and lysophosphatidylethanolamine (LPE) as acyl donors in the acylation of GPC. Contributes to the maintenance of phosphatidylcholine (PC) homeostasis and might also have specific functions in acyl editing of PC, such as transferring acyl groups modified at the sn-2 position of PC to the sn-1. This is Glycerophosphocholine acyltransferase 1 from Schizosaccharomyces pombe (strain 972 / ATCC 24843) (Fission yeast).